The following is a 195-amino-acid chain: Early light-induced protein 1, chloroplastic (195 aa).

The transit peptide at 1–46 directs the protein to the chloroplast; it reads MATASFNMQSVFAGGLTTRKINTNKLFSAGSFPNLKRNYPVGVRCM. The tract at residues 46–81 is disordered; that stretch reads MAEGGPTNEDSSPAPSTSAAQPLPKSPSPPPPMKPK. Residues 56-68 are compositionally biased toward low complexity; it reads SSPAPSTSAAQPL. Over residues 69 to 79 the composition is skewed to pro residues; it reads PKSPSPPPPMK. Transmembrane regions (helical) follow at residues 104 to 124, 131 to 151, and 175 to 195; these read LAMVGFVAALAVELSKGENVL, GVSWFLGTTAILTLASLVPLF, and FAMLGLVALAFTEFVKGGTLV.

The protein belongs to the ELIP/psbS family.

Its subcellular location is the plastid. It is found in the chloroplast thylakoid membrane. Its function is as follows. Prevents excess accumulation of free chlorophyll by inhibiting the entire chlorophyll biosynthesis pathway (e.g. 5-aminolevulinate synthesis and Mg-protoporphyrin IX chelatase activity), and hence prevent photooxidative stress. Probably involved in the integration of pigments into the mature light-harvesting pigment-protein complexes. Light-harvesting chlorophyll (LHC) a/b-binding protein required to ensure a high rate of chlorophyll accumulation during deetiolation in continuous high light. Involved in seed germination. May fulfill a photoprotective functions. This is Early light-induced protein 1, chloroplastic from Arabidopsis thaliana (Mouse-ear cress).